A 769-amino-acid chain; its full sequence is Serine/threonine-protein kinase PLK4 (769 aa).

Residues 10–263 (YEVYEILGKG…LDQVLQHPFM (254 aa)) form the Protein kinase domain. ATP-binding positions include 16–24 (LGKGGFASV) and Lys39. Catalysis depends on Asp134, which acts as the Proton acceptor. Disordered stretches follow at residues 280–304 (SSDS…SSYG), 337–380 (PQQR…LDIP), and 592–651 (APLT…VLSS). The span at 337-371 (PQQRPQSASHNKPTSDFFSGISNDPRTMAPSSPTK) shows a compositional bias: polar residues. The Cryptic POLO box 1 (CPB1) domain occupies 374-491 (KKRLDIPPLN…ARFVQMVKAK (118 aa)). In terms of domain architecture, Cryptic POLO box 2 (CPB2) spans 492-595 (TPKITYYSEK…GRRPANAPLT (104 aa)). Positions 605–648 (TKENQLYSNISSPNTPQTPHQMPSFAMSTASHTSAGNPLTQRPV) are enriched in polar residues. One can recognise a POLO box domain in the interval 662 to 745 (AMKKCTIAGV…MPAILRELNA (84 aa)).

This sequence belongs to the protein kinase superfamily. Ser/Thr protein kinase family. CDC5/Polo subfamily. As to quaternary structure, homodimer. In terms of processing, ubiquitinated; leading to its degradation by the proteasome.

The protein resides in the cytoplasm. It localises to the cytoskeleton. Its subcellular location is the microtubule organizing center. The protein localises to the centrosome. It is found in the centriole. It carries out the reaction L-seryl-[protein] + ATP = O-phospho-L-seryl-[protein] + ADP + H(+). The enzyme catalyses L-threonyl-[protein] + ATP = O-phospho-L-threonyl-[protein] + ADP + H(+). Its function is as follows. Serine/threonine-protein kinase that plays a central role in centriole duplication. Able to trigger procentriole formation on the surface of the mother centriole cylinder, leading to the recruitment of centriole biogenesis proteins. When overexpressed, it is able to induce centrosome amplification through the simultaneous generation of multiple procentrioles adjoining each parental centriole during S phase. In Aedes aegypti (Yellowfever mosquito), this protein is Serine/threonine-protein kinase PLK4 (SAK).